A 251-amino-acid chain; its full sequence is Carbohydrate deacetylase (251 aa).

Positions 59 and 122 each coordinate Mg(2+).

It belongs to the YdjC deacetylase family. Homodimer. Mg(2+) serves as cofactor.

Functionally, probably catalyzes the deacetylation of acetylated carbohydrates an important step in the degradation of oligosaccharides. This Vibrio parahaemolyticus serotype O3:K6 (strain RIMD 2210633) protein is Carbohydrate deacetylase.